The primary structure comprises 248 residues: 1-(5-phosphoribosyl)-5-[(5-phosphoribosylamino)methylideneamino] imidazole-4-carboxamide isomerase (248 aa).

Asp-7 (proton acceptor) is an active-site residue. The active-site Proton donor is the Asp-129.

The protein belongs to the HisA/HisF family.

Its subcellular location is the cytoplasm. It catalyses the reaction 1-(5-phospho-beta-D-ribosyl)-5-[(5-phospho-beta-D-ribosylamino)methylideneamino]imidazole-4-carboxamide = 5-[(5-phospho-1-deoxy-D-ribulos-1-ylimino)methylamino]-1-(5-phospho-beta-D-ribosyl)imidazole-4-carboxamide. Its pathway is amino-acid biosynthesis; L-histidine biosynthesis; L-histidine from 5-phospho-alpha-D-ribose 1-diphosphate: step 4/9. The sequence is that of 1-(5-phosphoribosyl)-5-[(5-phosphoribosylamino)methylideneamino] imidazole-4-carboxamide isomerase from Aeromonas salmonicida (strain A449).